Consider the following 364-residue polypeptide: Valine dehydrogenase (364 aa).

Lys-91 is an active-site residue. 191–197 contacts NAD(+); that stretch reads GVGKVGH.

The protein belongs to the Glu/Leu/Phe/Val dehydrogenases family. As to quaternary structure, homodimer.

It localises to the cytoplasm. It carries out the reaction L-valine + NAD(+) + H2O = 3-methyl-2-oxobutanoate + NH4(+) + NADH + H(+). It participates in amino-acid degradation; L-valine degradation. Its activity is regulated as follows. Inhibited by pyridoxal 5'-phosphate (PLP). Its function is as follows. Oxidative deamination of branched-chain amino acids. Oxidizes L-valine and L-alpha-aminobutyric acid efficiently, and L-alanine and L-isoleucine less efficiently. D-valine and L-glutamate were not substrates for the enzyme. The catabolism of valine is the major source of fatty acid precursors for macrolide biosynthesis and a vital source of antibiotic precursors. The sequence is that of Valine dehydrogenase from Streptomyces albus (strain ATCC 21838 / DSM 41398 / FERM P-419 / JCM 4703 / NBRC 107858).